A 1154-amino-acid polypeptide reads, in one-letter code: CRISPR-associated endoribonuclease Cas13a (1154 aa).

2 HEPN-like fold regions span residues 330-466 (TTSN…RFIN) and 923-1154 (FVHL…EMKK).

It belongs to the CRISPR-associated endoribonuclease Cas13a family. A divalent metal cation serves as cofactor.

With respect to regulation, target RNA acts as an activator for non-specific ssRNA degradation. Its function is as follows. CRISPR (clustered regularly interspaced short palindromic repeat), is an adaptive immune system that provides protection against mobile genetic elements (viruses, transposable elements and conjugative plasmids). CRISPR clusters contain sequences complementary to antecedent mobile elements and target invading nucleic acids. Unlike many single-component effectors, this CRISPR-Cas system targets RNA. CRISPR clusters are transcribed from pre-CRISPR RNA (crRNA) and processed into crRNA by this protein. Cleaves linear target ssRNA in a pre-crRNA-dependent fashion, preferentially before U residues. Binding a viable target RNA target activates this protein for non-specific RNA degradation in vitro (called collateral RNA degradation), which is fairly sensitive as it requires picomolar levels of viable target RNA. In Paludibacter propionicigenes (strain DSM 17365 / JCM 13257 / WB4), this protein is CRISPR-associated endoribonuclease Cas13a.